The primary structure comprises 830 residues: MSKMRVLFLAVFLMNSVLMIYCDSDDYIRAGYNHKYPFRICSIAKGTDLMRFDRDISCSPYKSNAKMSEGFFIIYKTNIETYTFPVRTYKNELTFPTSYRDVGVVYFLDRTVMGLAMPVYEANLVNSRAQCYSAVAIKRPDGTVFSAYHEDNNKNETLELFPLNFKSVTNKRFITTKEPYFARGPLWLYSTSTSLNCIVTEATAKAKYPFSYFALTTGEIVEGSPFFDGSNGKHFAEPLEKLTILENYTMIEDLMNGMNGATTLVRKIAFLEKGDTLFSWEIKEENESVCMLKHWTTVTHGLRAETDETYHFISKELTAAFVASKESLNLTDPKQTCIKNEFEKIITDVYMSDYNDAYSMNGSYQIFKTTGDLILIWQPLVQKSLMVLEQGSVNLRRRRDLVDVKSRHDILYVQLQYLYDTLKDYINDALGNLAESWCLDQKRTITMLHELSKISPSSIVSEVYGRPISAQLHGDVLAISKCIEVNQSSVQLYKSMRVVDAKGVRSETMCYNRPLVTFSFVNSTPEVVLGQLGLDNEILLGDHRTEECEIPSTKIFLSGNHAHVYTDYTHTNSTPIEDIEVLDAFIRLKIDPLENADFKLLDLYSPDELSRANVFDLENILREYNSYKSALYTIEAKIATNTPSYVNGINSFLQGLGAIGTGLGSVISVTAGALGDIVGGVVSFLKNPFGGGLMLILAIVVVVIIIVVFVRQKHVLSKPIDMMFPYATNPVTTVSSVTGTTVVKTPSVKDADGGTSVAVSEKEEGMADVSGQISGDEYSQEDALKMLKAIKSLDESYRRKPSSSESHASKPSLIDRIRYRGYKSVNVEEA.

The signal sequence occupies residues 1 to 19 (MSKMRVLFLAVFLMNSVLM). Residues 20 to 688 (IYCDSDDYIR…GGVVSFLKNP (669 aa)) are Virion surface-facing. 4 disulfide bridges follow: C41/C482, C58/C438, C131/C197, and C290/C337. An involved in fusion and/or binding to host membrane region spans residues 98-104 (SYRDVGV). A glycan (N-linked (GlcNAc...) asparagine; by host) is linked at N155. The involved in fusion and/or binding to host membrane stretch occupies residues 184-191 (GPLWLYST). N-linked (GlcNAc...) asparagine; by host glycosylation is found at N247, N286, N329, N361, and N486. A disulfide bridge connects residues C510 and C548. Hydrophobic membrane proximal region regions lie at residues 634-686 (IEAK…SFLK) and 644-685 (SYVN…VSFL). A helical transmembrane segment spans residues 689 to 709 (FGGGLMLILAIVVVVIIIVVF). Residues 710–830 (VRQKHVLSKP…GYKSVNVEEA (121 aa)) are Intravirion-facing. An Internalization motif motif is present at residues 822-825 (YKSV).

It belongs to the herpesviridae glycoprotein B family. In terms of assembly, homotrimer; disulfide-linked. Binds to heparan sulfate proteoglycans. Interacts with gH/gL heterodimer. In terms of processing, a proteolytic cleavage by host furin generates two subunits that remain linked by disulfide bonds.

It localises to the virion membrane. It is found in the host cell membrane. The protein localises to the host endosome membrane. Its subcellular location is the host Golgi apparatus membrane. Its function is as follows. Envelope glycoprotein that forms spikes at the surface of virion envelope. Essential for the initial attachment to heparan sulfate moieties of the host cell surface proteoglycans. Involved in fusion of viral and cellular membranes leading to virus entry into the host cell. Following initial binding to its host receptors, membrane fusion is mediated by the fusion machinery composed at least of gB and the heterodimer gH/gL. May be involved in the fusion between the virion envelope and the outer nuclear membrane during virion egress. The protein is Envelope glycoprotein B of Homo sapiens (Human).